The chain runs to 215 residues: UPF0502 protein YceH (215 aa).

Lysine 80 carries the N6-acetyllysine modification.

Belongs to the UPF0502 family.

This Shigella boydii serotype 18 (strain CDC 3083-94 / BS512) protein is UPF0502 protein YceH.